A 90-amino-acid chain; its full sequence is UPF0213 protein lin0209 (90 aa).

The region spanning 5-80 (NEHFFYVLKC…KKLSRKNKDS (76 aa)) is the GIY-YIG domain.

It belongs to the UPF0213 family.

The protein is UPF0213 protein lin0209 of Listeria innocua serovar 6a (strain ATCC BAA-680 / CLIP 11262).